The following is a 1720-amino-acid chain: DNA-directed RNA polymerase I subunit RPA1 (1720 aa).

The Zn(2+) site is built by Cys64, Cys67, Cys74, His77, Cys104, and Cys107. A clamp region spans residues 110 to 201 (LTCPRAVIHL…IALFWKAHMN (92 aa)). The Zn(2+) site is built by Cys205 and Cys208. Ser240 carries the phosphoserine modification. The segment at 320–426 (FTNGQTVNLQ…IRQILEKKEG (107 aa)) is clamp. Positions 403–416 (DSEMDKLMMDKYPG) are rudder. 3 residues coordinate DNA: Lys424, Arg429, and Arg436. The tract at residues 468-542 (YPQPVTPWNV…QGTKIVCRHV (75 aa)) is involved in RRN3 binding to Pol I complex. Arg552 serves as a coordination point for RNA. Mg(2+) contacts are provided by Asp588, Asp590, and Asp592. Asp592 contributes to the RNA binding site. A funnel region spans residues 805–883 (KPKADVKRQR…NEINKACMPF (79 aa)). The segment at 960–1001 (KPPEFFFHCMAGREGLVDTAVKTSRSGYLQRCIIKHLEGLVV) is bridging helix. The mediates the interaction with TOP2A stretch occupies residues 1060–1155 (ADPKKALHHF…SLSVWRPDIY (96 aa)). Residues 1207 to 1248 (PGEAVGLLAAQSIGEPSTQMTLNTFHFAGRGEMNVTLGIPRL) form a trigger loop region. Arg1249 is a DNA binding site. A disordered region spans residues 1365 to 1498 (RNVNTRRATQ…SQEPQGPEAM (134 aa)). Residues 1373-1390 (TQRDLDNAGELGRSRGEQ) are compositionally biased toward basic and acidic residues. Residue Ser1386 is modified to Phosphoserine. 2 stretches are compositionally biased toward acidic residues: residues 1391–1412 (EGDE…DADA) and 1422–1446 (EEEV…EDMQ). A compositionally biased stretch (basic and acidic residues) spans 1447 to 1461 (EERNPHREGARKTQE). The segment covering 1462-1474 (QDEEVGLGTEEDP) has biased composition (acidic residues).

The protein belongs to the RNA polymerase beta' chain family. As to quaternary structure, component of the RNA polymerase I (Pol I) complex consisting of 13 subunits: a ten-subunit catalytic core composed of POLR1A/RPA1, POLR1B/RPA2, POLR1C/RPAC1, POLR1D/RPAC2, POLR1H/RPA12, POLR2E/RPABC1, POLR2F/RPABC2, POLR2H/RPABC3, POLR2K/RPABC4 and POLR2L/RPABC5; a mobile stalk subunit POLR1F/RPA43 protruding from the core and additional subunits homologous to general transcription factors POLR1E/RPA49 and POLR1G/RPA34. Part of Pol I pre-initiation complex (PIC), in which Pol I core assembles with RRN3 and promoter-bound UTBF and SL1/TIF-IB complex. Interacts (via dock II domain) with TOP2A; this interaction may assist Pol I transcription initiation by releasing supercoils occurring during DNA unwinding. Interacts with CAVIN1; this interaction induces the dissociation of Pol I complex paused at rDNA terminator sequences. Interacts with MYO1C. Interacts with ERBB2. Interacts with DDX11. Interacts with RECQL5. Requires Mg(2+) as cofactor.

Its subcellular location is the nucleus. The protein resides in the nucleolus. It localises to the chromosome. The catalysed reaction is RNA(n) + a ribonucleoside 5'-triphosphate = RNA(n+1) + diphosphate. In terms of biological role, catalytic core component of RNA polymerase I (Pol I), a DNA-dependent RNA polymerase which synthesizes ribosomal RNA precursors using the four ribonucleoside triphosphates as substrates. Transcribes 47S pre-rRNAs from multicopy rRNA gene clusters, giving rise to 5.8S, 18S and 28S ribosomal RNAs. Pol I-mediated transcription cycle proceeds through transcription initiation, transcription elongation and transcription termination stages. During transcription initiation, Pol I pre-initiation complex (PIC) is recruited by the selectivity factor 1 (SL1/TIF-IB) complex bound to the core promoter that precedes an rDNA repeat unit. The PIC assembly bends the promoter favoring the formation of the transcription bubble and promoter escape. Once the polymerase has escaped from the promoter it enters the elongation phase during which RNA is actively polymerized, based on complementarity with the template DNA strand. Highly processive, assembles in structures referred to as 'Miller trees' where many elongating Pol I complexes queue and transcribe the same rDNA coding regions. At terminator sequences downstream of the rDNA gene, PTRF interacts with Pol I and halts Pol I transcription leading to the release of the RNA transcript and polymerase from the DNA. Forms Pol I active center together with the second largest subunit POLR1B/RPA2. Appends one nucleotide at a time to the 3' end of the nascent RNA, with POLR1A/RPA1 contributing a Mg(2+)-coordinating DxDGD motif, and POLR1B/RPA2 participating in the coordination of a second Mg(2+) ion and providing lysine residues believed to facilitate Watson-Crick base pairing between the incoming nucleotide and the template base. Typically, Mg(2+) ions direct a 5' nucleoside triphosphate to form a phosphodiester bond with the 3' hydroxyl of the preceding nucleotide of the nascent RNA, with the elimination of pyrophosphate. Has proofreading activity: Pauses and backtracks to allow the cleavage of a missincorporated nucleotide via POLR1H/RPA12. High Pol I processivity is associated with decreased transcription fidelity. The polypeptide is DNA-directed RNA polymerase I subunit RPA1 (Homo sapiens (Human)).